A 650-amino-acid chain; its full sequence is Fructose-1,6-bisphosphatase class 3 (650 aa).

Belongs to the FBPase class 3 family. Mn(2+) is required as a cofactor.

The enzyme catalyses beta-D-fructose 1,6-bisphosphate + H2O = beta-D-fructose 6-phosphate + phosphate. It functions in the pathway carbohydrate biosynthesis; gluconeogenesis. The polypeptide is Fructose-1,6-bisphosphatase class 3 (Staphylococcus xylosus).